We begin with the raw amino-acid sequence, 1091 residues long: MKLLYTDIRTSLTEILTREAEELVAAGKRVFYIAPNSLSFEKERAVLEYLSQQASFSITVTRFAQMARYLVLNDLPAKTTLDDIGLGLAFYKCLAELDPKDLRVYGAIKQDPQLIQQLIELYHEMTKSQMSFLDLENLTDEDKRADLLLIFEKVTAYLNQGQLAQESQLSHLIEAIENDKVSSDFNQIALVIDGFTRFSAEEERVVDLLHGKGVEIVIGAYASKKAYTSPFSEGNLYQASVKFLHHLASKYQTPAQDCSQTHEKMDSFDKASRLLESSYDFSELALDVDEKDRENLQIWSCLTQKEELELVARSIRQKLHENSDLSYKHFRILLGDVASYQLSLKTIFDQYQIPFYLGRSEAMAHHPLTQFVESILALKRYRFRQEDLINLLRTDLYTDLSQSDIDAFEQYIRYLGINGLPAFQQTFTKSHHGKFNLERLNVLRLRILAPLETLFASRKQKAEKLLQKWSVFLKEGAVTKQLQDLTTTLEAVEQERQAEVWKAFCHVLEQFATVFAGSQVSLEDFLALLHSGMSLSQYRTIPATVDTVLVQSYDLIAPLTADFVYAIGLTQDNLPKISQNTSLLTDEERQNLNQATEEGVQLLIASSENLKKNRYTMLSLVNSARKQLFLSAPSLFNESESKESAYLQELIHFGFRRREKRMNHKGLSKEDMGSYHSLLSSLVAYHQQGEMSDTEQDLTFVKVLSRVIGKKLDQQGLENPAIPTSPSSKTLAKDTLQALYPAKQEFYLSTSGLTEFYRNEYSYFLRYVLGLQEELRLHPDARSHGNFLHRIFERALQLPNEDSFDQRLEQAIQETSQEREFEAIYQESLEAQFTKEVLLDVARTTGHILRHNPAIETIKEEANFGGKDQAFIQLDNGRSVFVRGKVDRIDRLKANGAIGVVDYKSSLTQFQFPHFFNGLNSQLPTYLAALKREGEQNFFGAMYLEMAEPVQSLMAVKSLAGAVVEASKSMKYQGLFLEKESSYLGEFYNKNKANQLTDEEFQLLLDYNAYLYKKAAEKILAGRFAINPYTENGRSIAPYVQQHQAITGFEANYHLGQARFLEKLDLADGKRLVGEKLKQAWLEKIREELNR.

Belongs to the helicase family. AddB/RexB type 2 subfamily. In terms of assembly, heterodimer of RexA (AddA) and RexB. Mg(2+) is required as a cofactor.

Involved in DNA double-strand break repair. Is not involved in recombination during natural competence or in plasmid establishment. In terms of biological role, the heterodimer acts as both an ATP-dependent DNA helicase and an ATP-dependent, dual-direction single-stranded exonuclease. Recognizes the chi site generating a DNA molecule suitable for the initiation of homologous recombination. This subunit has 5' -&gt; 3' nuclease activity but not helicase activity. The chain is Exonuclease/helicase subunit RexB from Streptococcus pneumoniae serotype 4 (strain ATCC BAA-334 / TIGR4).